The chain runs to 304 residues: C-type lectin domain-containing protein 141 (304 aa).

An N-terminal signal peptide occupies residues 1 to 19 (MRSSSTLLIAFGLFLASMS). Residues 29 to 100 (GSGGHRPPSS…TTPEPTTTKV (72 aa)) form a disordered region. Residues 51–99 (TKPPKSTSTPSTSTSTPTTTTTTTTTTTTTPTTTTTTTTTTTPEPTTTK) show a composition bias toward low complexity.

The chain is C-type lectin domain-containing protein 141 (clec-141) from Caenorhabditis elegans.